The primary structure comprises 419 residues: Gamma-glutamyl phosphate reductase (419 aa).

Belongs to the gamma-glutamyl phosphate reductase family.

Its subcellular location is the cytoplasm. It catalyses the reaction L-glutamate 5-semialdehyde + phosphate + NADP(+) = L-glutamyl 5-phosphate + NADPH + H(+). The protein operates within amino-acid biosynthesis; L-proline biosynthesis; L-glutamate 5-semialdehyde from L-glutamate: step 2/2. Catalyzes the NADPH-dependent reduction of L-glutamate 5-phosphate into L-glutamate 5-semialdehyde and phosphate. The product spontaneously undergoes cyclization to form 1-pyrroline-5-carboxylate. This chain is Gamma-glutamyl phosphate reductase, found in Azoarcus sp. (strain BH72).